An 80-amino-acid polypeptide reads, in one-letter code: UPF0154 protein SaurJH1_1431 (80 aa).

A helical membrane pass occupies residues 4 to 24 (WLAIIFIVAALILGLIGGFLL).

It belongs to the UPF0154 family.

Its subcellular location is the cell membrane. This Staphylococcus aureus (strain JH1) protein is UPF0154 protein SaurJH1_1431.